The sequence spans 938 residues: Translation initiation factor IF-2 (938 aa).

The tract at residues 55 to 322 (KAEASAAPAA…RKSKRARRQE (268 aa)) is disordered. Low complexity-rich tracts occupy residues 57–68 (EASAAPAAPAEK) and 77–117 (KKAA…AAAP). Residues 118-136 (KPGPKPAPVAEQPAPPAEP) show a composition bias toward pro residues. 3 stretches are compositionally biased toward low complexity: residues 141-153 (APEA…APAA), 180-198 (GMGR…AGDN), and 224-233 (MMPKSPSAFG). Residues 247 to 293 (PGRGGAPGRGGAPGRGGVGTGAPGRGGAPGGGFGPSGGGRPGGGRPG) are compositionally biased toward gly residues. Residues 310 to 319 (RRGRKSKRAR) are compositionally biased toward basic residues. One can recognise a tr-type G domain in the interval 431 to 603 (ARPPVVTVMG…VVLTADASLD (173 aa)). The tract at residues 440 to 447 (GHVDHGKT) is G1. 440–447 (GHVDHGKT) contacts GTP. The segment at 465–469 (GITQH) is G2. A G3 region spans residues 490 to 493 (DTPG). Residues 490–494 (DTPGH) and 544–547 (NKID) each bind GTP. The interval 544–547 (NKID) is G4. The G5 stretch occupies residues 580 to 582 (SAK).

It belongs to the TRAFAC class translation factor GTPase superfamily. Classic translation factor GTPase family. IF-2 subfamily.

It is found in the cytoplasm. One of the essential components for the initiation of protein synthesis. Protects formylmethionyl-tRNA from spontaneous hydrolysis and promotes its binding to the 30S ribosomal subunits. Also involved in the hydrolysis of GTP during the formation of the 70S ribosomal complex. The protein is Translation initiation factor IF-2 of Nocardioides sp. (strain ATCC BAA-499 / JS614).